The sequence spans 359 residues: 3-dehydroquinate synthase (359 aa).

This sequence belongs to the archaeal-type DHQ synthase family.

The enzyme catalyses 2-amino-2,3,7-trideoxy-D-lyxo-hept-6-ulosonate + NAD(+) + H2O = 3-dehydroquinate + NH4(+) + NADH + H(+). Its function is as follows. Catalyzes the oxidative deamination and cyclization of 2-amino-3,7-dideoxy-D-threo-hept-6-ulosonic acid (ADH) to yield 3-dehydroquinate (DHQ), which is fed into the canonical shikimic pathway of aromatic amino acid biosynthesis. In Methanosphaera stadtmanae (strain ATCC 43021 / DSM 3091 / JCM 11832 / MCB-3), this protein is 3-dehydroquinate synthase.